A 146-amino-acid chain; its full sequence is Hemoglobin subunit beta (146 aa).

N-acetylvaline is present on Val1. Positions 2–146 (HLTGEEKSTV…VATALAHKYH (145 aa)) constitute a Globin domain. Ser44 is subject to Phosphoserine. Lys59 bears the N6-acetyllysine mark. Residue His63 participates in heme b binding. Lys82 carries the post-translational modification N6-acetyllysine. His92 is a binding site for heme b. An S-nitrosocysteine modification is found at Cys93. Residue Lys144 is modified to N6-acetyllysine.

This sequence belongs to the globin family. As to quaternary structure, heterotetramer of two alpha chains and two beta chains. Red blood cells.

In terms of biological role, involved in oxygen transport from the lung to the various peripheral tissues. The protein is Hemoglobin subunit beta (HBB) of Macrotus californicus (Californian leaf-nosed bat).